The primary structure comprises 384 residues: Putative odorant receptor 98b (384 aa).

At 1–34 (MLTDKFLRLQSALFRLLGLELLHEQDVGHRYPWR) the chain is on the cytoplasmic side. The helical transmembrane segment at 35 to 55 (SICCILSVASFMPLTIAFGLQ) threads the bilayer. At 56-66 (NVQNVEQLTDS) the chain is on the extracellular side. The helical transmembrane segment at 67–87 (LCSVLVDLLALCKIGLFLWLY) threads the bilayer. Over 88–128 (KDFKFLIGQFYCVLQTETHTAVAEMIVTRESRRDQFISAMY) the chain is Cytoplasmic. Residues 129 to 149 (AYCFITAGLSACLMSPLSMLI) traverse the membrane as a helical segment. Residues 150–177 (SYQRTGELQPKFPFPSVYPWDNMKLSNY) are Extracellular-facing. Residues 178–198 (IISYFWNVCAALGVALPTVCV) form a helical membrane-spanning segment. The Cytoplasmic segment spans residues 199 to 258 (DTLFCSLSHNLCALFQIARHKMMHFEGRNTKETHENLKHVFQLYALCLNLGHFLNEYFRP). A helical membrane pass occupies residues 259–279 (LICQFVAASLHLCVLCYQLSA). The Extracellular segment spans residues 280 to 284 (NILQP). A helical transmembrane segment spans residues 285 to 305 (ALLFYAAFTAAVVGQVSIYCF). The Cytoplasmic portion of the chain corresponds to 306–329 (CGSSIHSECQLFGQAIYESSWPHL). Residues 330 to 350 (LQENLQLVSSLKIAMMRSSLG) form a helical membrane-spanning segment. Over 351-384 (CPIDGYFFEANRETLITVSKAFIKVSKKTPQVND) the chain is Extracellular.

Belongs to the insect chemoreceptor superfamily. Heteromeric odorant receptor channel (TC 1.A.69) family. Or1a subfamily. Interacts with Orco. Complexes exist early in the endomembrane system in olfactory sensory neurons (OSNs), coupling these complexes to the conserved ciliary trafficking pathway.

Its subcellular location is the cell membrane. Functionally, odorant receptor which mediates acceptance or avoidance behavior, depending on its substrates. The odorant receptor repertoire encodes a large collection of odor stimuli that vary widely in identity, intensity, and duration. May form a complex with Orco to form odorant-sensing units, providing sensitive and prolonged odorant signaling and calcium permeability. In Drosophila melanogaster (Fruit fly), this protein is Putative odorant receptor 98b (Or98b).